The primary structure comprises 176 residues: Small ribosomal subunit protein uS4 (176 aa).

The S4 RNA-binding domain occupies 103–165; the sequence is RRLQTIVYKK…PTSPYAKRRL (63 aa).

It belongs to the universal ribosomal protein uS4 family. In terms of assembly, part of the 30S ribosomal subunit. Contacts protein S5. The interaction surface between S4 and S5 is involved in control of translational fidelity.

One of the primary rRNA binding proteins, it binds directly to 16S rRNA where it nucleates assembly of the body of the 30S subunit. Functionally, with S5 and S12 plays an important role in translational accuracy. The sequence is that of Small ribosomal subunit protein uS4 from Hyperthermus butylicus (strain DSM 5456 / JCM 9403 / PLM1-5).